The sequence spans 680 residues: tRNA 5-methylaminomethyl-2-thiouridine biosynthesis bifunctional protein MnmC (680 aa).

The tract at residues 1–267 is tRNA (mnm(5)s(2)U34)-methyltransferase; that stretch reads MTAEPNKPCQ…MAAILSSDAP (267 aa). Positions 273 to 680 are FAD-dependent cmnm(5)s(2)U34 oxidoreductase; sequence IGGGLASAHL…LRKLLKGKAL (408 aa).

It in the N-terminal section; belongs to the methyltransferase superfamily. tRNA (mnm(5)s(2)U34)-methyltransferase family. This sequence in the C-terminal section; belongs to the DAO family. It depends on FAD as a cofactor.

It is found in the cytoplasm. It catalyses the reaction 5-aminomethyl-2-thiouridine(34) in tRNA + S-adenosyl-L-methionine = 5-methylaminomethyl-2-thiouridine(34) in tRNA + S-adenosyl-L-homocysteine + H(+). Catalyzes the last two steps in the biosynthesis of 5-methylaminomethyl-2-thiouridine (mnm(5)s(2)U) at the wobble position (U34) in tRNA. Catalyzes the FAD-dependent demodification of cmnm(5)s(2)U34 to nm(5)s(2)U34, followed by the transfer of a methyl group from S-adenosyl-L-methionine to nm(5)s(2)U34, to form mnm(5)s(2)U34. This chain is tRNA 5-methylaminomethyl-2-thiouridine biosynthesis bifunctional protein MnmC, found in Shewanella putrefaciens (strain CN-32 / ATCC BAA-453).